The chain runs to 95 residues: MSRSSKKGPYVDIKLLDKIEAMNKANEKRVIRTWSRDSTIFPQMIGHTIAVHDGRRHVPVYITENMVGHKLGEFAPTRFFRGHGGKKADKRGKVK.

This sequence belongs to the universal ribosomal protein uS19 family.

Its function is as follows. Protein S19 forms a complex with S13 that binds strongly to the 16S ribosomal RNA. This chain is Small ribosomal subunit protein uS19, found in Chloroflexus aurantiacus (strain ATCC 29366 / DSM 635 / J-10-fl).